A 90-amino-acid polypeptide reads, in one-letter code: U7-theraphotoxin-Hhn1c (90 aa).

The N-terminal stretch at 1-19 (MKTAIFTVVLALAVFAVLS) is a signal peptide. Positions 20–50 (FGWEANEKALSEEFTELIHEKEAASETEARE) are excised as a propeptide. 3 cysteine pairs are disulfide-bonded: Cys51–Cys65, Cys58–Cys70, and Cys64–Cys81.

Belongs to the neurotoxin 10 (Hwtx-1) family. 13 (Hntx-13) subfamily. In terms of tissue distribution, expressed by the venom gland.

The protein localises to the secreted. Its function is as follows. Ion channel inhibitor. The chain is U7-theraphotoxin-Hhn1c from Cyriopagopus hainanus (Chinese bird spider).